A 264-amino-acid polypeptide reads, in one-letter code: MKIAIFNNHAEHSVIIAKKLILAMKKNNVDIDDRNPDIVVSVGGDGTLLGAFQKYVDQTESVRFVGLHTGHLGFYTDWLSTELDQFVDSLIHDNGQKVSYPLLELTVVRTSGESYKFLALNEAVIKQPIGTLVADIYLGGQAFERFRGDGIAVATPTGSTAYNKANGGAVLHPSLPAIQMSEIASINNRVFRTLGSPLIVPQDQEIVMKPKSNHFLVMYDQEEIKGHNITELRFKVSEKRVHFAQYRHVDFWRRVQNAFISEIE.

Asp-45 serves as the catalytic Proton acceptor. Residues 45–46 (DG), 121–122 (NE), Arg-147, Asp-149, Ala-184, and Gln-221 contribute to the NAD(+) site.

Belongs to the NAD kinase family. Requires a divalent metal cation as cofactor.

It localises to the cytoplasm. It catalyses the reaction NAD(+) + ATP = ADP + NADP(+) + H(+). In terms of biological role, involved in the regulation of the intracellular balance of NAD and NADP, and is a key enzyme in the biosynthesis of NADP. Catalyzes specifically the phosphorylation on 2'-hydroxyl of the adenosine moiety of NAD to yield NADP. This chain is NAD kinase, found in Leuconostoc mesenteroides subsp. mesenteroides (strain ATCC 8293 / DSM 20343 / BCRC 11652 / CCM 1803 / JCM 6124 / NCDO 523 / NBRC 100496 / NCIMB 8023 / NCTC 12954 / NRRL B-1118 / 37Y).